The sequence spans 88 residues: ATP synthase subunit 9, mitochondrial (88 aa).

Transmembrane regions (helical) follow at residues 8-28 (IGAGAATIASAGAAIGIGNVF) and 45-72 (LFGYAILGFALSELIALFALMMAFLILF).

The protein belongs to the ATPase C chain family. F-type ATPases have 2 components, CF(1) - the catalytic core - and CF(0) - the membrane proton channel. CF(1) has five subunits: alpha(3), beta(3), gamma(1), delta(1), epsilon(1). CF(0) has three main subunits: a, b and c.

It localises to the mitochondrion membrane. It carries out the reaction ATP + H2O + 4 H(+)(in) = ADP + phosphate + 5 H(+)(out). Functionally, this protein is one of the chains of the nonenzymatic membrane component (F0) of mitochondrial ATPase. The polypeptide is ATP synthase subunit 9, mitochondrial (ATP9) (Beta vulgaris (Sugar beet)).